Consider the following 197-residue polypeptide: Fucoxanthin-chlorophyll a-c binding protein D, chloroplastic (197 aa).

A chloroplast-targeting transit peptide spans 1 to 31 (MKTAVIASLIAGAAAFAPAKNAARTSVATNM). 3 helical membrane-spanning segments follow: residues 73–94 (ISML…PGTI), 114–133 (PAGG…SSVM), and 174–196 (GRAA…SLLP).

The protein belongs to the fucoxanthin chlorophyll protein family. The LHC complex of chromophytic algae is composed of fucoxanthin, chlorophyll A and C bound non-covalently by fucoxanthin chlorophyll proteins (FCPs). The ratio of the pigments in LHC; fucoxanthin: chlorophyll C: chlorophyll A; (0.6-1): (0.1-0.3): (1).

Its subcellular location is the plastid. The protein localises to the chloroplast thylakoid membrane. Its function is as follows. The light-harvesting complex (LHC) functions as a light receptor, it captures and delivers excitation energy to photosystems with which it is closely associated. Energy is transferred from the carotenoid and chlorophyll C (or B) to chlorophyll A and the photosynthetic reaction centers where it is used to synthesize ATP and reducing power. In Phaeodactylum tricornutum (Diatom), this protein is Fucoxanthin-chlorophyll a-c binding protein D, chloroplastic (FCPD).